The primary structure comprises 102 residues: Small ribosomal subunit protein uS10 (102 aa).

This sequence belongs to the universal ribosomal protein uS10 family. Part of the 30S ribosomal subunit.

Functionally, involved in the binding of tRNA to the ribosomes. This is Small ribosomal subunit protein uS10 from Micrococcus luteus (strain ATCC 4698 / DSM 20030 / JCM 1464 / CCM 169 / CCUG 5858 / IAM 1056 / NBRC 3333 / NCIMB 9278 / NCTC 2665 / VKM Ac-2230) (Micrococcus lysodeikticus).